We begin with the raw amino-acid sequence, 218 residues long: Thiopurine S-methyltransferase (218 aa).

4 residues coordinate S-adenosyl-L-methionine: W11, L46, E67, and R122.

This sequence belongs to the class I-like SAM-binding methyltransferase superfamily. TPMT family.

It is found in the cytoplasm. The enzyme catalyses S-adenosyl-L-methionine + a thiopurine = S-adenosyl-L-homocysteine + a thiopurine S-methylether.. The polypeptide is Thiopurine S-methyltransferase (Vibrio cholerae serotype O1 (strain ATCC 39541 / Classical Ogawa 395 / O395)).